The following is a 122-amino-acid chain: UPF0231 protein VV1_1657 (122 aa).

It belongs to the UPF0231 family.

The chain is UPF0231 protein VV1_1657 from Vibrio vulnificus (strain CMCP6).